The following is a 552-amino-acid chain: HTH-type transcriptional regulator SgrR (552 aa).

Positions 1 to 116 (MPSGRLQQQF…LISHLGRSFR (116 aa)) constitute an HTH marR-type domain. Residues 26–49 (LNELADLLNCSRRHMRTLLNTMQA) constitute a DNA-binding region (H-T-H motif). Positions 163-493 (ELEADIAHHW…RDWQDDAAQW (331 aa)) are solute-binding.

Its function is as follows. Activates the small RNA gene sgrS under glucose-phosphate stress conditions as well as yfdZ. Represses its own transcription under both stress and non-stress conditions. Might act as a sensor of the intracellular accumulation of phosphoglucose by binding these molecules in its C-terminal solute-binding domain. In Salmonella choleraesuis (strain SC-B67), this protein is HTH-type transcriptional regulator SgrR.